The sequence spans 281 residues: Putative phosphatase/phosphodiesterase MPN_349 (281 aa).

Fe cation contacts are provided by aspartate 12, glutamate 43, asparagine 44, and asparagine 71. Histidine 72 serves as the catalytic Proton donor. Fe cation is bound by residues histidine 158, histidine 183, and histidine 185.

This sequence belongs to the YmdB-like family. Fe(3+) serves as cofactor.

The chain is Putative phosphatase/phosphodiesterase MPN_349 from Mycoplasma pneumoniae (strain ATCC 29342 / M129 / Subtype 1) (Mycoplasmoides pneumoniae).